The sequence spans 188 residues: Large ribosomal subunit protein uL22 (188 aa).

The segment at 155-188 is disordered; it reads STPEGAKKGKKKKGTKDAVEKSSKRVKTAATAAH.

The protein belongs to the universal ribosomal protein uL22 family.

The polypeptide is Large ribosomal subunit protein uL22 (RpL17) (Agriotes lineatus (Lined click beetle)).